The following is a 33-amino-acid chain: Potassium channel toxin alpha-KTx 24.1 (33 aa).

Cystine bridges form between C4-C23, C9-C28, C13-C30, and C18-C33.

The protein belongs to the short scorpion toxin superfamily. Potassium channel inhibitor family. Alpha-KTx 24 subfamily. Post-translationally, contains 4 disulfide bonds. Expressed by the venom gland.

It localises to the secreted. In terms of biological role, reversibly blocks voltage-gated potassium channels Kv1.2/KCNA2, Kv1.3/KCNA3 and, weakly, Shaker B. The chain is Potassium channel toxin alpha-KTx 24.1 from Pandinus imperator (Emperor scorpion).